Here is a 504-residue protein sequence, read N- to C-terminus: Anaerobic nitric oxide reductase transcription regulator NorR (504 aa).

A 4-aspartylphosphate modification is found at D57. In terms of domain architecture, Sigma-54 factor interaction spans 187-416; it reads MIGLSPGMTQ…LEHAIHRAVV (230 aa). Residues 215–222 and 278–287 each bind ATP; these read GETGTGKE and ADNGTLFLDE. Positions 479–498 form a DNA-binding region, H-T-H motif; sequence WAASARMLETDVANLHRLAK.

The protein operates within nitrogen metabolism; nitric oxide reduction. Required for the expression of anaerobic nitric oxide (NO) reductase, acts as a transcriptional activator for at least the norVW operon. Activation also requires sigma-54. This Escherichia coli O7:K1 (strain IAI39 / ExPEC) protein is Anaerobic nitric oxide reductase transcription regulator NorR.